Here is a 647-residue protein sequence, read N- to C-terminus: Leishmanolysin-like peptidase (647 aa).

Zn(2+) is bound at residue His264. Residue Glu265 is part of the active site. The Zn(2+) site is built by His268 and His370.

The protein belongs to the peptidase M8 family. Requires Zn(2+) as cofactor. In terms of tissue distribution, expressed in all cell lines analyzed.

It is found in the cytoplasm. It localises to the lipid droplet. Its function is as follows. Metalloprotease. The polypeptide is Leishmanolysin-like peptidase (LMLN) (Homo sapiens (Human)).